Here is a 909-residue protein sequence, read N- to C-terminus: Phosphoenolpyruvate carboxylase (909 aa).

Residues His138 and Lys572 contribute to the active site.

Belongs to the PEPCase type 1 family. Mg(2+) serves as cofactor.

It catalyses the reaction oxaloacetate + phosphate = phosphoenolpyruvate + hydrogencarbonate. Functionally, forms oxaloacetate, a four-carbon dicarboxylic acid source for the tricarboxylic acid cycle. This is Phosphoenolpyruvate carboxylase from Lactobacillus delbrueckii subsp. bulgaricus (strain ATCC 11842 / DSM 20081 / BCRC 10696 / JCM 1002 / NBRC 13953 / NCIMB 11778 / NCTC 12712 / WDCM 00102 / Lb 14).